The following is a 483-amino-acid chain: UDP-N-acetylmuramyl-tripeptide synthetase (483 aa).

Serine 43 serves as a coordination point for UDP-N-acetyl-alpha-D-muramoyl-L-alanyl-D-glutamate. ATP is bound at residue 116–122; the sequence is GTKGKTT. UDP-N-acetyl-alpha-D-muramoyl-L-alanyl-D-glutamate contacts are provided by residues 160–161, serine 187, and arginine 195; that span reads TT. Lysine 229 bears the N6-carboxylysine mark.

It belongs to the MurCDEF family. MurE subfamily. In terms of processing, carboxylation is probably crucial for Mg(2+) binding and, consequently, for the gamma-phosphate positioning of ATP.

The protein resides in the cytoplasm. The protein operates within cell wall biogenesis; peptidoglycan biosynthesis. Catalyzes the addition of an amino acid to the nucleotide precursor UDP-N-acetylmuramoyl-L-alanyl-D-glutamate (UMAG) in the biosynthesis of bacterial cell-wall peptidoglycan. The protein is UDP-N-acetylmuramyl-tripeptide synthetase of Lactococcus lactis subsp. cremoris (strain MG1363).